The sequence spans 193 residues: Xanthine phosphoribosyltransferase (193 aa).

Xanthine contacts are provided by leucine 20 and threonine 27. 5-phospho-alpha-D-ribose 1-diphosphate is bound at residue 128-132 (ANGQA). Lysine 156 contributes to the xanthine binding site.

The protein belongs to the purine/pyrimidine phosphoribosyltransferase family. Xpt subfamily. As to quaternary structure, homodimer.

The protein localises to the cytoplasm. It carries out the reaction XMP + diphosphate = xanthine + 5-phospho-alpha-D-ribose 1-diphosphate. It functions in the pathway purine metabolism; XMP biosynthesis via salvage pathway; XMP from xanthine: step 1/1. Its function is as follows. Converts the preformed base xanthine, a product of nucleic acid breakdown, to xanthosine 5'-monophosphate (XMP), so it can be reused for RNA or DNA synthesis. This Streptococcus pneumoniae (strain CGSP14) protein is Xanthine phosphoribosyltransferase.